Consider the following 436-residue polypeptide: Cold sensitive U2 snRNA suppressor 1 (436 aa).

Basic residues predominate over residues 1–10 (MARTKSRKRS). The segment at 1–22 (MARTKSRKRSGNNQNKNASVVN) is disordered. Residues 12 to 22 (NNQNKNASVVN) are compositionally biased toward low complexity. Residues Thr104 and Thr112 each carry the phosphothreonine modification. Position 114 is a phosphoserine (Ser114). The tract at residues 374–436 (EFENSKEDTQ…SEKQLYTVLK (63 aa)) is disordered. Over residues 389–408 (GRQDDKIDDEVEHKLDHFQE) the composition is skewed to basic and acidic residues.

The protein to mammalian SAP 145. Some, to C.elegans ZK632.11. Belongs to the CWC complex (or CEF1-associated complex), a spliceosome sub-complex reminiscent of a late-stage spliceosome composed of the U2, U5 and U6 snRNAs and at least BUD13, BUD31, BRR2, CDC40, CEF1, CLF1, CUS1, CWC2, CWC15, CWC21, CWC22, CWC23, CWC24, CWC25, CWC27, ECM2, HSH155, IST3, ISY1, LEA1, MSL1, NTC20, PRP8, PRP9, PRP11, PRP19, PRP21, PRP22, PRP45, PRP46, SLU7, SMB1, SMD1, SMD2, SMD3, SMX2, SMX3, SNT309, SNU114, SPP2, SYF1, SYF2, RSE1 and YJU2. Interacts with RDS3.

It is found in the nucleus. Essential splicing protein required for U2 snRNP binding to pre-mRNA during spliceosome assembly. This Saccharomyces cerevisiae (strain ATCC 204508 / S288c) (Baker's yeast) protein is Cold sensitive U2 snRNA suppressor 1 (CUS1).